Here is a 929-residue protein sequence, read N- to C-terminus: Isoleucine--tRNA ligase (929 aa).

The short motif at 58–68 (PYANGDIHIGH) is the 'HIGH' region element. An L-isoleucyl-5'-AMP-binding site is contributed by Glu563. Positions 605–609 (KMSKS) match the 'KMSKS' region motif. Lys608 is an ATP binding site. Cys892, Cys895, Cys912, and Cys915 together coordinate Zn(2+).

The protein belongs to the class-I aminoacyl-tRNA synthetase family. IleS type 1 subfamily. In terms of assembly, monomer. Requires Zn(2+) as cofactor.

Its subcellular location is the cytoplasm. It catalyses the reaction tRNA(Ile) + L-isoleucine + ATP = L-isoleucyl-tRNA(Ile) + AMP + diphosphate. Catalyzes the attachment of isoleucine to tRNA(Ile). As IleRS can inadvertently accommodate and process structurally similar amino acids such as valine, to avoid such errors it has two additional distinct tRNA(Ile)-dependent editing activities. One activity is designated as 'pretransfer' editing and involves the hydrolysis of activated Val-AMP. The other activity is designated 'posttransfer' editing and involves deacylation of mischarged Val-tRNA(Ile). This chain is Isoleucine--tRNA ligase, found in Neisseria meningitidis serogroup C / serotype 2a (strain ATCC 700532 / DSM 15464 / FAM18).